The sequence spans 315 residues: Tyrosine recombinase XerC (315 aa).

The region spanning 1–103 is the Core-binding (CB) domain; that stretch reads MIASFYAFLD…AIKSFAKFCV (103 aa). Residues 124 to 306 form the Tyr recombinase domain; sequence ELPSPLTYEQ…SMKLKKQIHD (183 aa). Active-site residues include R164, K188, H258, R261, and H284. Catalysis depends on Y293, which acts as the O-(3'-phospho-DNA)-tyrosine intermediate.

It belongs to the 'phage' integrase family. XerC subfamily. In terms of assembly, forms a cyclic heterotetrameric complex composed of two molecules of XerC and two molecules of XerD.

The protein localises to the cytoplasm. Site-specific tyrosine recombinase, which acts by catalyzing the cutting and rejoining of the recombining DNA molecules. The XerC-XerD complex is essential to convert dimers of the bacterial chromosome into monomers to permit their segregation at cell division. It also contributes to the segregational stability of plasmids. The chain is Tyrosine recombinase XerC from Chlamydia muridarum (strain MoPn / Nigg).